Reading from the N-terminus, the 996-residue chain is METIDIQNRSFVVRWVKCGRGDVINYQIKPLKKSIEVGIYKKLKSSVDDHASAVHIAPDTKTLLDYTTKSLLHKGSSSNIEEHHRRSSQHSHSSSNGSDNKRKERSYSSLSISGIQQQSQEIPLREKLSASGFTLVKRVGNVSGNTMVQGDLEVKDTDYYYAFILDNSSSKNAKKKILFNASVINGDNQSMISTRSTPPARPTALSRTSTQQDMLFRVGQGRYLQGYLLKKRRKRLQGFKKRFFTLDFRYGTLSYYLNDHNQTCRGEIVISLSSVSANKKDKIIIIDSGMEVWVLKATTKENWQSWVDALQTCFDDQFEDKDTSTLEENPDILDDDKEVINKSSPQDHDHLTPTATTKSALSHRQHTQKDMDDIYVPLPSESYATFSMNLRLIQQRLEQCKKDSLSYKPTTLHQRSEGLNGTHSSSSVFTNNRVSSFNHSSSGMTSSDSLASEEVPSNKTYIEHALYNQLADLEVFVSRFVTQGEVLFKDHQILCKKAKDTRVSLTSYLSENDEFFDAEEEISRGVIILPDTEDDINNIVEETPLLGKSDQNEFTKEVQLSGSEQIASSSVESYTTNDENHSRKHLKNRHKNRRRGHPHHQKTKSAQSSTETFTSKDLFALSYPKSVTRRNDIPEAAASPPSLLSFLRKNVGKDLSSIAMPVTSNEPISILQLISETFEYAPLLTKATQRPDPITFVSAFAISFLSIYRDKTRTLRKPFNPLLAETFELIREDMGFRLISEKVSHRPPVFAFFAEHLDWECSYTVTPSQKFWGKSIELNNEGILRLKFKTTGELFEWTQPTTILKNLIAGERYMEPVNEFEVHSSKGDKSHILFDKAGMFSGRSEGFKVSIIPPPSSNRKKETLAGKWTQSLANETTHETIWEVGDLVSNPKKKYGFTKFTANLNEITEIEKGNLPPTDSRLRPDIRAYEEGNVDKAEEWKLKLEQLQRERRNKGQDVEPKYFEKVSKNEWKYITGPKSYWERRKKHDWSDISQLW.

The segment at 1-183 is GOLD domain; that stretch reads METIDIQNRS…KKKILFNASV (183 aa). The interval 75 to 114 is disordered; it reads GSSSNIEEHHRRSSQHSHSSSNGSDNKRKERSYSSLSISG. 2 positions are modified to phosphoserine: Ser-190 and Ser-193. Thr-210 carries the post-translational modification Phosphothreonine. A PH domain is found at 221–315; the sequence is GRYLQGYLLK…WVDALQTCFD (95 aa). A Phosphothreonine modification is found at Thr-323. Phosphoserine is present on Ser-324. A phosphothreonine mark is found at Thr-325 and Thr-352. The interval 338–372 is disordered; that stretch reads EVINKSSPQDHDHLTPTATTKSALSHRQHTQKDMD. Residues 514–520 carry the FFAT motif; the sequence is EFFDAEE. Residues 556 to 611 are disordered; that stretch reads KEVQLSGSEQIASSSVESYTTNDENHSRKHLKNRHKNRRRGHPHHQKTKSAQSSTE. Positions 558–577 are enriched in polar residues; that stretch reads VQLSGSEQIASSSVESYTTN. Residues 582 to 603 are compositionally biased toward basic residues; the sequence is SRKHLKNRHKNRRRGHPHHQKT. Ser-605 bears the Phosphoserine mark. The segment at 642–982 is OSBP-related domain (ORD); it reads SLLSFLRKNV…YITGPKSYWE (341 aa). A 1,2-diacyl-sn-glycero-3-phospho-(1D-myo-inositol 4-phosphate) is bound by residues 657–660, Lys-717, 745–746, and 945–949; these read SIAM, HR, and EQLQR.

Belongs to the OSBP family. Interacts with SCS2.

Its subcellular location is the cytoplasm. The protein resides in the endoplasmic reticulum membrane. Functionally, lipid transport protein (LTP) involved in non-vesicular transfer of lipids between membranes. Functions in phosphoinositide-coupled directional transport of various lipids by carrying the lipid molecule in a hydrophobic pocket and transferring it between membranes through the cytosol. Involved in maintenance of intracellular sterol distribution and homeostasis. May serve as a sensor of PI4P levels at PM-ER membrane contact site, regulating PI4P phosphatase SAC1 activity. May be involved in ergosterol transport from the plasma membrane (PM) to the ER, however it does not bind sterols directly. Plays a role in the positive regulation of vesicular transport of ceramide from the ER to the Golgi, negatively regulating COPII-mediated ER export of cargos. The protein is Oxysterol-binding protein homolog 3 of Saccharomyces cerevisiae (strain ATCC 204508 / S288c) (Baker's yeast).